Here is a 630-residue protein sequence, read N- to C-terminus: SHC-transforming protein 4 (630 aa).

Residues 1-185 are CH2; it reads MRERGQDSLA…RQDRHFLQHL (185 aa). 2 disordered regions span residues 39 to 80 and 118 to 150; these read TSLD…QESP and KLQE…QQDL. Over residues 125–142 the composition is skewed to low complexity; the sequence is PGSSGPSSPETSLSRSGT. The PID domain maps to 186–369; sequence LGMGMNYCVR…VHIDSHAEER (184 aa). Positions 370 to 525 are CH1; the sequence is EDHEYYNEIP…HIKQQLWSEE (156 aa). Y424 carries the phosphotyrosine modification. Composition is skewed to polar residues over residues 471–486 and 502–513; these read LQST…SAQP and PGATAQPASSHS. The interval 471–514 is disordered; it reads LQSTPGSAGNQRSAQPLGSPWHCGKAPETVQPGATAQPASSHSL. Residues 526-617 form the SH2 domain; it reads CYHGKLSRKA…GSEVSLKQPV (92 aa).

As to quaternary structure, interacts (via PID domain) with phosphorylated MUSK (via NPXY motif); undergoes tyrosine phosphorylation downstream of activated MUSK. Interacts with GRB2; the interaction is dependent of Tyr-424 phosphorylation and increased by EGF. Phosphorylated; the phosphorylation is enhanced by EGF. Phosphorylation at Tyr-424 is required for the interaction with GRB2. In terms of tissue distribution, only expressed in melanomas. Weakly expressed in normal melanocytes and benign nevi. Highly expressed at the transition from radial growth phase to vertical growth phase and metastatic melanomas, when tumor cells acquire migratory competence and invasive potential.

The protein localises to the postsynaptic cell membrane. Activates both Ras-dependent and Ras-independent migratory pathways in melanomas. Contributes to the early phases of agrin-induced tyrosine phosphorylation of CHRNB1. This is SHC-transforming protein 4 (SHC4) from Homo sapiens (Human).